Reading from the N-terminus, the 562-residue chain is Tubby-related protein 2 (562 aa).

Residues 1 to 81 (MDREGPRGPR…RRGEERFQSD (81 aa)) form a disordered region. Positions 35-46 (QKLEQQRQLFEK) are enriched in basic and acidic residues. Phosphoserine occurs at positions 152, 153, and 155. The tract at residues 179-294 (LRRGWLASPG…SNHNAWNMTC (116 aa)) is disordered. Position 211 is a phosphothreonine (Thr-211). Ser-213 is subject to Phosphoserine. The segment covering 225-240 (DGDHGDLAPCKVEENT) has biased composition (basic and acidic residues). The segment covering 285–294 (SNHNAWNMTC) has biased composition (polar residues).

It belongs to the TUB family. As to expression, expressed in retina and testis.

The protein resides in the cytoplasm. It is found in the secreted. The polypeptide is Tubby-related protein 2 (Tulp2) (Mus musculus (Mouse)).